Here is a 173-residue protein sequence, read N- to C-terminus: Disulfide bond formation protein B (173 aa).

At 1–16 the chain is on the cytoplasmic side; that stretch reads MRILSSLKTFSQSRLS. Residues 17 to 33 form a helical membrane-spanning segment; sequence WLLLLAFVVFFTLCAMY. Over 34–51 the chain is Periplasmic; it reads FQHVMLLAPCVMCIYERI. A disulfide bridge links Cys43 with Cys46. The chain crosses the membrane as a helical span at residues 52 to 67; the sequence is AMLGIGVAALIGAIAP. Residues 68 to 74 are Cytoplasmic-facing; that stretch reads QNPVVRW. Residues 75–92 form a helical membrane-spanning segment; sequence LGFAAWGASSYKGLMLAI. The Periplasmic portion of the chain corresponds to 93–147; that stretch reads EHVNYQFNPSPFATCDLFVTFPAWAPLNQWAPNLFEAYGDCSKVVWQFLTLSMPQ. Residues Cys107 and Cys133 are joined by a disulfide bond. The helical transmembrane segment at 148-166 threads the bilayer; that stretch reads WLVVIFAANLLALAIFVVA. Residues 167 to 173 are Cytoplasmic-facing; that stretch reads QLAKTSR.

It belongs to the DsbB family.

It is found in the cell inner membrane. In terms of biological role, required for disulfide bond formation in some periplasmic proteins. Acts by oxidizing the DsbA protein. The polypeptide is Disulfide bond formation protein B (Vibrio cholerae serotype O1 (strain ATCC 39315 / El Tor Inaba N16961)).